The chain runs to 506 residues: Galactose/methyl galactoside import ATP-binding protein MglA (506 aa).

2 ABC transporter domains span residues L14–E249 and V260–L506. G46 to S53 is a binding site for ATP.

Belongs to the ABC transporter superfamily. Galactose/methyl galactoside importer (TC 3.A.1.2.3) family. The complex is composed of one ATP-binding protein (MglA), two transmembrane proteins (MglC) and a solute-binding protein (MglB).

The protein resides in the cell inner membrane. It carries out the reaction D-galactose(out) + ATP + H2O = D-galactose(in) + ADP + phosphate + H(+). It catalyses the reaction methyl beta-D-galactoside(out) + ATP + H2O = methyl beta-D-galactoside(in) + ADP + phosphate + H(+). Its function is as follows. Part of the ABC transporter complex MglABC involved in galactose/methyl galactoside import. Responsible for energy coupling to the transport system. The protein is Galactose/methyl galactoside import ATP-binding protein MglA of Haemophilus influenzae (strain 86-028NP).